A 207-amino-acid chain; its full sequence is MSHHHEGCCKHEGQPRHEGCCKGEKSEHEHCGHGHQHEHGQCCGGRHGRGGGRRQRFFGHGELRLVILDILSRDDSHGYELIKAIENLTQGNYTPSPGVIYPTLDFLQEQSLITIREEEGGKKQIALTEQGAQWLEENREQVEMIEERIKARCVGAALRQNPQMKRALDNFKAVLDLRVNQSDISDAQIKKIIAVIDRAAFDITQLD.

The span at M1–G40 shows a compositional bias: basic and acidic residues. The segment at M1 to R46 is disordered.

In terms of assembly, oligomer (probable predominant form) and monomer.

With respect to regulation, divalent metals such as nickel and iron have a similar negative effect on YqjI DNA-binding activity. In terms of biological role, represses the expression of YqjH which is involved in iron homeostasis under excess nickel conditions. Also represses its own expression. The chain is Transcriptional regulator YqjI (yqjI) from Escherichia coli (strain K12).